The following is a 930-amino-acid chain: MSKKRLYEIAKELGKESKEVVARAKELGLDVKSHSSSVEEAVAAKIAASFKPAAAPKVEAKPAAPKVSAEKKAEKSEPAKPAVAKEEAKPAEPVAPKTEKVAAKPQSRNFKAEREARAKEQAERRKQNKGNNRDQQQNGNRQKNDGRNGGKQGQSNRDNRRFNDQAKKQQGQQKRRNERRQQEDKRSNQVAPRIDFKARAAALKAEQNAEYARSSEERFKQYQAAKEALAQANKRKEPEEIFEEAAKLAEQAQQVQAVVEVVPEKKEPAVDTRRKKQARPDKNRDDYDHEEDGPRKQQKNRSSQNQVRNQKNSNWNNNKKNKKGNNKNNRNQTPKPVTERKFHELPTEFEYTDGMTVAEIAKRIKREPAEIVKKLFMMGVMATQNQSLDGETIELLMVDYGIEAKQKVEVDNADIERFFVEDGYLNEDELVERPPVVTIMGHVDHGKTTLLDTLRNSRVATGEAGGITQHIGAYQIVENGKKITFLDTPGHAAFTSMRARGASVTDITILVVAADDGVMPQTIEAINHSKAANVPIIVAINKIDKPGANPERVIGELAEHGVMSTAWGGDSEFVEISAKFNQNIEELLETVLLVAEIQELKADPTVRAIGTVIEARLDKGKGAVATLLVQQGTLNVQDPIVVGNTFGRVRAMTNDLGRRVKVAGPSTPVSITGLNEAPMAGDHFAVYEDEKSARAAGEERAKRALMKQRQATQRVSLENLFDTLKAGELKSVNVIIKADVQGSVEALSASLQKIDVEGVKVTIVHSAVGAINESDVTLAEASNAFIVGFNVRPTPQARQQAEADDVEIRLHSIIYKVIEEMEEAMKGMLDPEFEEKVIGEAVIRETFKVSKVGTIGGFMVINGKVARDSKVRVIRDGVVIYDGELASLKHYKDDVKEVTNGREGGLMIDCYNDIKMDDVIEAYVMEEIKR.

The span at 50–67 (FKPAAAPKVEAKPAAPKV) shows a compositional bias: low complexity. 2 disordered regions span residues 50 to 217 (FKPA…SSEE) and 260 to 346 (EVVP…HELP). 2 stretches are compositionally biased toward basic and acidic residues: residues 68-90 (SAEKKAEKSEPAKPAVAKEEAKP) and 110-125 (FKAEREARAKEQAERR). The span at 129-141 (KGNNRDQQQNGNR) shows a compositional bias: low complexity. Composition is skewed to basic and acidic residues over residues 157–167 (RDNRRFNDQAK) and 262–295 (VPEKKEPAVDTRRKKQARPDKNRDDYDHEEDGPR). Residues 309–318 (NQKNSNWNNN) are compositionally biased toward low complexity. Over residues 337 to 346 (VTERKFHELP) the composition is skewed to basic and acidic residues. In terms of domain architecture, tr-type G spans 432-599 (ERPPVVTIMG…TVLLVAEIQE (168 aa)). Residues 441–448 (GHVDHGKT) are G1. Residue 441–448 (GHVDHGKT) participates in GTP binding. The interval 466 to 470 (GITQH) is G2. The interval 487–490 (DTPG) is G3. Residues 487–491 (DTPGH) and 541–544 (NKID) each bind GTP. The segment at 541–544 (NKID) is G4. The interval 577–579 (SAK) is G5.

Belongs to the TRAFAC class translation factor GTPase superfamily. Classic translation factor GTPase family. IF-2 subfamily.

It localises to the cytoplasm. Functionally, one of the essential components for the initiation of protein synthesis. Protects formylmethionyl-tRNA from spontaneous hydrolysis and promotes its binding to the 30S ribosomal subunits. Also involved in the hydrolysis of GTP during the formation of the 70S ribosomal complex. This chain is Translation initiation factor IF-2, found in Streptococcus pneumoniae (strain P1031).